Here is a 214-residue protein sequence, read N- to C-terminus: MNLEKQLHEGLEAISGLSADVAHLSSRLLRYIELITKWNSTHNLTSVRNPESMITRHMLDSLVVLPHISGPNIVDVGSGAGLPGIPIALARPEWQVVMVESNQKKAVFMQQVVVELRLQNVSIRQERVEKIKPGNKVDTVISRAFSSLERFMRLSKHLCENNVDHCRFIAMKGAFPDMELMQLPPEFSVEQIIPVAVPGLRAKRHLVVMRCHSE.

S-adenosyl-L-methionine is bound by residues Gly-77, Leu-82, 128–129, and Arg-143; that span reads VE.

This sequence belongs to the methyltransferase superfamily. RNA methyltransferase RsmG family.

Its subcellular location is the cytoplasm. It catalyses the reaction guanosine(527) in 16S rRNA + S-adenosyl-L-methionine = N(7)-methylguanosine(527) in 16S rRNA + S-adenosyl-L-homocysteine. In terms of biological role, specifically methylates the N7 position of guanine in position 527 of 16S rRNA. The protein is Ribosomal RNA small subunit methyltransferase G of Nitrosomonas eutropha (strain DSM 101675 / C91 / Nm57).